Consider the following 1504-residue polypeptide: Nischarin (1504 aa).

At Ala2 the chain carries N-acetylalanine. A necessary for binding to phosphoinositide-3-P; not sufficient for targeting to endosomes region spans residues 2 to 133 (ATARTFGPER…GITAALAEEL (132 aa)). The PX domain occupies 11-121 (REAEPAKEAR…AHFLHFHFYE (111 aa)). The segment at 120 to 695 (YEINGITAAL…ERLALEWALG (576 aa)) is necessary for homooligomerization and targeting to endosomes. Positions 245–869 (LSVRFSATSM…LVYSDKRMVQ (625 aa)) are interaction with PAK1. LRR repeat units lie at residues 288–309 (ALTT…VKLI), 311–332 (KIEF…QHLY), 333–354 (NLVH…HTKL), 356–377 (NIKT…HKLY), 378–399 (SLVN…RSIG), and 403–424 (CLEH…RTKV). A compositionally biased stretch (basic and acidic residues) spans 463–478 (KSKLSNPEKKGGEDSR). 4 disordered regions span residues 463-501 (KSKL…SASL), 524-547 (SSTD…LESI), 554-573 (SDDL…EHAE), and 628-687 (REEG…EEER). Ser541, Ser543, and Ser546 each carry phosphoserine. Positions 634 to 695 (EQGEEEDEEE…ERLALEWALG (62 aa)) form a coiled coil. Acidic residues-rich tracts occupy residues 635-649 (QGEE…EEDV) and 661-685 (DVEE…EAEE). Residues 660–869 (PDVEEEEGGG…LVYSDKRMVQ (210 aa)) form an interaction with LIMK region. The interval 709–807 (KVLWCFLIHV…ANLHEFHADL (99 aa)) is interaction with ITGA5. Positions 1016–1104 (TPGTGGSPQG…PAPPPAEAPA (89 aa)) are disordered. Ser1022 bears the Phosphoserine mark. The span at 1032-1043 (PAERRASNDQRP) shows a compositional bias: basic and acidic residues. Residues 1063–1078 (PAAASASGPAKTPAPA) show a composition bias toward low complexity. Position 1282 is a phosphothreonine (Thr1282). Position 1284 is a phosphoserine (Ser1284).

As to quaternary structure, homooligomer. Interacts with GRB2. Interacts with PIK3R1; probably associates with the PI3-kinase complex. Interacts with IRS4. Found in a complex with ITGA5 and PAK1. Found in a complex with LIMK1 and PAK1. Interacts with ITGA5 (via cytoplasmic domain); this interaction is direct. Interacts with PAK1 (via kinase domain); this interaction is direct and is increased upon activation of PAK1. Interacts with LIMK1 (via PDZ and kinase domain); this interaction is direct. Interacts with LIMK2; this interaction depends on LIMK2 activity. Interacts with RAC1 (activated state). Interacts with STK11; this interaction may increase STK11 activity. As to expression, isoform 1, isoform 3 and isoform 4 are expressed in brain. Isoform 1 is expressed in endocrine tissues.

Its subcellular location is the cell membrane. The protein resides in the cytoplasm. It localises to the early endosome. The protein localises to the recycling endosome. In terms of biological role, acts either as the functional imidazoline-1 receptor (I1R) candidate or as a membrane-associated mediator of the I1R signaling. Binds numerous imidazoline ligands that induces initiation of cell-signaling cascades triggering to cell survival, growth and migration. Its activation by the agonist rilmenidine induces an increase in phosphorylation of mitogen-activated protein kinases MAPK1 and MAPK3 in rostral ventrolateral medulla (RVLM) neurons that exhibited rilmenidine-evoked hypotension. Blocking its activation with efaroxan abolished rilmenidine-induced mitogen-activated protein kinase phosphorylation in RVLM neurons. Acts as a modulator of Rac-regulated signal transduction pathways. Suppresses Rac1-stimulated cell migration by interacting with PAK1 and inhibiting its kinase activity. Also blocks Pak-independent Rac signaling by interacting with RAC1 and inhibiting Rac1-stimulated NF-kB response element and cyclin D1 promoter activation. Also inhibits LIMK1 kinase activity by reducing LIMK1 'Tyr-508' phosphorylation. Inhibits Rac-induced cell migration and invasion in breast and colon epithelial cells. Inhibits lamellipodia formation, when overexpressed. Plays a role in protection against apoptosis. Involved in association with IRS4 in the enhancement of insulin activation of MAPK1 and MAPK3. When overexpressed, induces a redistribution of cell surface ITGA5 integrin to intracellular endosomal structures. This chain is Nischarin (NISCH), found in Homo sapiens (Human).